Reading from the N-terminus, the 181-residue chain is Oligoribonuclease (181 aa).

The Exonuclease domain maps to 8-171 (LIWVDLEMTG…DDIHDSIAEL (164 aa)). Residue Y129 is part of the active site.

Belongs to the oligoribonuclease family.

It localises to the cytoplasm. 3'-to-5' exoribonuclease specific for small oligoribonucleotides. This Photobacterium profundum (strain SS9) protein is Oligoribonuclease.